A 48-amino-acid polypeptide reads, in one-letter code: Palustrin-3b (48 aa).

Cysteine 43 and cysteine 48 are disulfide-bonded.

In terms of tissue distribution, expressed by the skin glands.

It is found in the secreted. In terms of biological role, antimicrobial activity against Gram-negative bacterium E.coli. This Lithobates palustris (Pickerel frog) protein is Palustrin-3b.